Consider the following 1423-residue polypeptide: Autophagy-related protein 11 (1423 aa).

Coiled coils occupy residues 551–589 (DDELLRSLQDDKSKLESKLKTAESRVRRLEDLLHRQSQA) and 625–978 (SEGT…ASEL). 2 disordered regions span residues 583 to 660 (LHRQ…SNRA) and 1028 to 1048 (RAERAAQNPNDSSDPGTSLRK). Residues 585-602 (RQSQASRPGNLFQPQTNS) are compositionally biased toward polar residues. Positions 631–648 (LLRRISELENELREEKQR) are enriched in basic and acidic residues. 2 stretches are compositionally biased toward polar residues: residues 650–660 (SRIQNDLSNRA) and 1034–1047 (QNPNDSSDPGTSLR). The stretch at 1102–1130 (HRIKEVEHKARKWQKEARSYRDRAHIAQK) forms a coiled coil. The interval 1327 to 1423 (SLRAAAPETP…DYTYESPGKK (97 aa)) is disordered. A compositionally biased stretch (basic and acidic residues) spans 1383 to 1395 (KTAEPRRMLDRQE).

The protein belongs to the ATG11 family. In terms of assembly, homodimer and potential homooligomers. Interacts with ATG1 kinase and the ATG19 and ATG34 cargo protein transporters. Interacts with ATG9, ATG17 and ATG20.

It localises to the preautophagosomal structure membrane. The protein resides in the vacuole membrane. Involved in cytoplasm to vacuole transport (Cvt), pexophagy, mitophagy and nucleophagy. Recruits mitochondria for their selective degradation via autophagy (mitophagy) during starvation, through its interaction with ATG32. Works as scaffold proteins that recruit ATG proteins to the pre-autophagosome (PAS), the site of vesicle/autophagosome formation. Required for ATG9 anterograde transport from the mitochondria to the PAS. Also recruits the ATG19-prAPE1 complex to the PAS. Required for the Cvt vesicles completion. Plays a role in morphological differentiation and cephalosporin production. This is Autophagy-related protein 11 from Hapsidospora chrysogena (Acremonium chrysogenum).